Consider the following 259-residue polypeptide: Sugar fermentation stimulation protein homolog (259 aa).

Belongs to the SfsA family.

This chain is Sugar fermentation stimulation protein homolog, found in Chloroflexus aurantiacus (strain ATCC 29364 / DSM 637 / Y-400-fl).